A 205-amino-acid chain; its full sequence is Ribonuclease HII (205 aa).

The RNase H type-2 domain maps to 15-205 (SQVCGIDEAG…SFKLRKLGEK (191 aa)). Positions 21, 22, and 117 each coordinate a divalent metal cation.

Belongs to the RNase HII family. Requires Mn(2+) as cofactor. The cofactor is Mg(2+).

It localises to the cytoplasm. The catalysed reaction is Endonucleolytic cleavage to 5'-phosphomonoester.. Functionally, endonuclease that specifically degrades the RNA of RNA-DNA hybrids. This chain is Ribonuclease HII, found in Chlorobaculum tepidum (strain ATCC 49652 / DSM 12025 / NBRC 103806 / TLS) (Chlorobium tepidum).